The chain runs to 106 residues: ATP-dependent Clp protease adapter protein ClpS (106 aa).

It belongs to the ClpS family. Binds to the N-terminal domain of the chaperone ClpA.

In terms of biological role, involved in the modulation of the specificity of the ClpAP-mediated ATP-dependent protein degradation. This Escherichia fergusonii (strain ATCC 35469 / DSM 13698 / CCUG 18766 / IAM 14443 / JCM 21226 / LMG 7866 / NBRC 102419 / NCTC 12128 / CDC 0568-73) protein is ATP-dependent Clp protease adapter protein ClpS.